We begin with the raw amino-acid sequence, 230 residues long: 3,4-dihydroxy-2-butanone 4-phosphate synthase (230 aa).

D-ribulose 5-phosphate-binding positions include 42-43, Asp-47, 155-159, and Glu-179; these read RE and RRGHT. Position 43 (Glu-43) interacts with Mg(2+). Residue His-158 coordinates Mg(2+).

It belongs to the DHBP synthase family. As to quaternary structure, homodimer. The cofactor is Mg(2+). It depends on Mn(2+) as a cofactor.

The catalysed reaction is D-ribulose 5-phosphate = (2S)-2-hydroxy-3-oxobutyl phosphate + formate + H(+). The protein operates within cofactor biosynthesis; riboflavin biosynthesis; 2-hydroxy-3-oxobutyl phosphate from D-ribulose 5-phosphate: step 1/1. Functionally, catalyzes the conversion of D-ribulose 5-phosphate to formate and 3,4-dihydroxy-2-butanone 4-phosphate. The protein is 3,4-dihydroxy-2-butanone 4-phosphate synthase of Bordetella bronchiseptica (strain ATCC BAA-588 / NCTC 13252 / RB50) (Alcaligenes bronchisepticus).